The sequence spans 873 residues: V-type proton ATPase 116 kDa subunit a 2 (873 aa).

Residues 1 to 407 lie on the Cytoplasmic side of the membrane; the sequence is MGSLSRSEEM…TIITFPFLFS (407 aa). The chain crosses the membrane as a helical span at residues 408-428; sequence CMFGDLGHGCIMLMAGLWFVL. Over 429 to 445 the chain is Lumenal; sequence REKNLQARNIKDEIFNM. A helical transmembrane segment spans residues 446-466; sequence FFGGRYIILLMGLFSIHAGII. Over 467–543 the chain is Cytoplasmic; sequence YNDMFAKSFN…NKLNFLNSMK (77 aa). Residues 544 to 564 form a helical membrane-spanning segment; sequence MKLSVILGISQMTFGVILSFF. Asn565 and Asn569 each carry an N-linked (GlcNAc...) asparagine glycan. At 565–574 the chain is on the lumenal side; sequence NHTYNKSKID. A helical transmembrane segment spans residues 575–595; sequence IFTVFIPQMLFMGCIFMYLCL. The Cytoplasmic portion of the chain corresponds to 596–614; it reads QIILKWLFFWTKEATVFGQ. The chain crosses the membrane as a helical span at residues 615-635; the sequence is IYPGSHCAPSLLIGLINMFMM. Residues 636–668 lie on the Lumenal side of the membrane; the sequence is KDRNAGFVVDGGKVNGEYREVETCYLSQWYPGQ. A helical transmembrane segment spans residues 669–689; it reads SVIEMILVVIAVICVPVMLFG. Over 690 to 785 the chain is Cytoplasmic; the sequence is KPIHHVMQQK…LWALSLAHAQ (96 aa). Residues 786 to 806 traverse the membrane as a helical segment; it reads LSEVLWHMVFVTGGLGISGTA. A topological domain (lumenal) is located at residue Gly807. A helical transmembrane segment spans residues 808 to 828; it reads FIAVYVVFFIFFVLTISILVL. The Cytoplasmic segment spans residues 829–873; the sequence is MEGLSAFLHTLRLHWVEFQSKFYLGLGYPFVPYSFKTALQEAEAA.

The protein belongs to the V-ATPase 116 kDa subunit family. V-ATPase is a heteromultimeric enzyme made up of two complexes: the ATP-hydrolytic V1 complex and the proton translocation V0 complex. The V1 complex consists of three catalytic AB heterodimers that form a heterohexamer, three peripheral stalks each consisting of EG heterodimers, one central rotor including subunits D and F, and the regulatory subunits C and H. The proton translocation complex V0 consists of the proton transport subunit a, a ring of proteolipid subunits c9c'', rotary subunit d, subunits e and f, and the accessory subunits vah-19/Ac45 and vah-20/PRR. Interacts with V-type proton ATPase subunit C vha-11. In terms of tissue distribution, expressed in the H-shaped excretory cell (at protein level). Expressed in hypodermal cells around the vulva. Expressed in the main epidermal syncytium. Expressed in the sheath cells associated with head and tail sensory organs; specifically, expressed in the apical sheath cells of the amphids and CEP neuron and in the sheath cells of the OLQ sensory organ.

Its subcellular location is the apical cell membrane. It is found in the endosome. The protein resides in the multivesicular body membrane. Its function is as follows. Subunit of the V0 complex of vacuolar(H+)-ATPase (V-ATPase), a multisubunit enzyme composed of a peripheral complex (V1) that hydrolyzes ATP and a membrane integral complex (V0) that translocates protons. V-ATPase is responsible for acidifying and maintaining the pH of intracellular compartments and in some cell types, is targeted to the plasma membrane, where it is responsible for acidifying the extracellular environment. Involved in the assembly of the V-ATPase complex. The V-ATPase is required for the function of the excretory canal. Independently of the V1 complex, the V0 complex of the V-ATPase is required for multivesicular body membrane fusion with the apical membrane of the epidermal cells during exosome release and thus regulates the release of cuticle components such as Hedgehog-related peptide wrt-2 but not collagen. Also, in the epidermis, regulates the trafficking of che-14 and rdy-2. Regulates the secretion of granular material found in the amphid channel and in controlling osmoregulation in the amphid pocket. In Caenorhabditis elegans, this protein is V-type proton ATPase 116 kDa subunit a 2.